The chain runs to 454 residues: MYSSSREEAVAAFDNLDTALNRVLKVSPDDLTIPECLAMLQRCEKIRRRLPAAEHPFINKLADQTDQTELGGKLPFALAERLHISRGEASRRIHEAADLGPRRTLTGQPLPPLLTATAAAQRAGHLGPAHVQVIRCFLHQLPHHVDLPTREKAEAELATLGGRFRPDQLHKLATKLADCLNPDGNYNDTDRARRRSIILGNQGPDGMSAISGYLTPEARATVDAVLAKLAAPGMANPADDTPCLAGTPSQAAIEADTRSAGQRHHDGLLAALRALLCSGELGQHNGLPAAIIVSTSLTELQSRAGHALTGGGTLLPMSDVIRLASHANHYLRIFDHGRELALYHTKRLASPGQRIVLYAKDRGCSFPNCDVPGYLTEVHHVTDFAQCQETDINELTQGCGPHHQLATTGGWITRKRKDGTTEWLPPAHLDHGQPRTNSYFHPEKLLHDSDEDDP.

The segment at 422–454 (EWLPPAHLDHGQPRTNSYFHPEKLLHDSDEDDP) is disordered.

It belongs to the Rv1128c/1148c/1588c/1702c/1945/3466 family.

This is an uncharacterized protein from Mycobacterium tuberculosis (strain CDC 1551 / Oshkosh).